The primary structure comprises 314 residues: Acetaldehyde dehydrogenase 3 (314 aa).

The Acyl-thioester intermediate role is filled by Cys-132. NAD(+)-binding positions include 163 to 171 (SAGPGTRAN) and Asn-291.

This sequence belongs to the acetaldehyde dehydrogenase family.

It carries out the reaction acetaldehyde + NAD(+) + CoA = acetyl-CoA + NADH + H(+). The protein is Acetaldehyde dehydrogenase 3 of Dechloromonas aromatica (strain RCB).